The following is a 452-amino-acid chain: Packaging protein 1 (452 aa).

The segment at 1–78 is disordered; it reads MLPCRSTGRR…AKPPQRGSLL (78 aa). 173 to 180 is a binding site for ATP; it reads GPTGCGKS. A DNA-binding region spans residues 442–452; that stretch reads RAYHVRKNKYQ.

This sequence belongs to the adenoviridae packaging protein 1 family. In terms of assembly, homodimer. Part of a genome packaging complex composed of packaging proteins 1, 2 and 3; this complex specifically binds to the packaging sequence on the left end of viral genomic DNA and performs packaging of the viral genome. Interacts with protein 33K.

It localises to the virion. It is found in the host nucleus. Its subcellular location is the host nucleoplasm. The protein resides in the host nucleolus. Functionally, component of the packaging machinery which encapsidates the viral DNA into preformed capsids and transcriptional activator of the viral major late promoter (MLP). Binds, along with packaging proteins 2 and 3, to the specific packaging sequence on the left end of viral genomic DNA and displays ATPase activity thereby providing the power stroke of the packaging machinery. The activity of packaging protein IVa2 is stimulated by protein 33K which acts as a terminase. May be the protein that pumps DNA into the capsid powered by ATP hydrolysis. Specifically binds to the 5'-CG-3' nucleotides of the repeats making up the packaging sequence. Component of the DEF-A and DEF-B transcription factors that bind downstream elements of the major late promoter (MLP), and stimulate transcription from the MLP after initiation of viral DNA replication. DEF-A is a heterodimer packaging proteins 1 and 2 and DEF-B is a homodimer of packaging protein 1. The sequence is that of Packaging protein 1 from Homo sapiens (Human).